The sequence spans 440 residues: uncharacterized protein (440 aa).

The next 10 helical transmembrane spans lie at 1–21, 29–49, 70–90, 101–121, 179–199, 226–246, 258–278, 343–363, 366–386, and 389–409; these read MLLV…QLYR, TVFI…SAFE, LLQM…IARI, VGVL…GIAM, TSII…LSLG, FVIR…AATS, IVAS…LLFF, IYPA…PFSF, ILTL…VGGG, and FAAI…GLLI.

The protein belongs to the dicarboxylate/amino acid:cation symporter (DAACS) (TC 2.A.23) family.

Its subcellular location is the cell membrane. This is an uncharacterized protein from Haemophilus influenzae (strain ATCC 51907 / DSM 11121 / KW20 / Rd).